Here is a 451-residue protein sequence, read N- to C-terminus: UPF0210 protein APL_1491 (451 aa).

This sequence belongs to the UPF0210 family. As to quaternary structure, homodimer.

The sequence is that of UPF0210 protein APL_1491 from Actinobacillus pleuropneumoniae serotype 5b (strain L20).